Consider the following 838-residue polypeptide: Collagen alpha-2(I) chain (838 aa).

The tract at residues 1-838 (GPMGIMGPRG…GTVGPAGIRS (838 aa)) is disordered. Residues 11–38 (FQGPAGEPGEPGQTGPAGARGPAGPPGK) are compositionally biased toward low complexity. Positions 39 to 53 (AGEDGHPGKPGRPGE) are enriched in basic and acidic residues. Composition is skewed to low complexity over residues 101 to 122 (SRGS…SAGP), 137 to 147 (PVGNTGPAGPA), 215 to 236 (NGES…RGIP), and 329 to 344 (AGNR…NGAQ). Gly residues predominate over residues 351-360 (GVQGGKGEQG). 2 stretches are compositionally biased toward low complexity: residues 407–424 (PGES…SRGP) and 436–446 (EPGVVGAPGTA). A compositionally biased stretch (gly residues) spans 447–456 (GPAGSGGIPG). 3 stretches are compositionally biased toward low complexity: residues 479–523 (VGTT…PRGT), 530–550 (VGPA…QPGA), and 568–581 (SAGP…PGPA). The span at 582–591 (GSRGDGGPPG) shows a compositional bias: gly residues. Residues 593–602 (TGFPGAAGRT) are compositionally biased toward low complexity. Gly residues predominate over residues 633–642 (GETGAGGPPG). A compositionally biased stretch (low complexity) spans 649–689 (TAGPQGIIGAPGIIGIPGSRGIPGVSGSVGEPGPIGISGPP). The span at 693–702 (GPSGGVGNPG) shows a compositional bias: gly residues. Low complexity-rich tracts occupy residues 703–718 (VNGA…NPGN), 736–758 (YAGN…VGPA), and 766–781 (EPGP…AIGP).

It belongs to the fibrillar collagen family. Trimers of one alpha 2(I) and two alpha 1(I) chains. Interacts (via C-terminus) with TMEM131 (via PapD-L domain); the interaction is direct and is involved in assembly and TRAPPIII ER-to-Golgi transport complex-dependent secretion of collagen. In terms of processing, prolines at the third position of the tripeptide repeating unit (G-X-Y) are hydroxylated in some or all of the chains. Forms the fibrils of tendon, ligaments and bones. In bones, the fibrils are mineralized with calcium hydroxyapatite.

The protein localises to the secreted. It is found in the extracellular space. Its subcellular location is the extracellular matrix. Type I collagen is a member of group I collagen (fibrillar forming collagen). This Cyclopes didactylus (Silky anteater) protein is Collagen alpha-2(I) chain.